Reading from the N-terminus, the 494-residue chain is Glycerol kinase (494 aa).

ADP is bound at residue T12. T12, T13, and S14 together coordinate ATP. T12 contacts sn-glycerol 3-phosphate. R16 provides a ligand contact to ADP. Sn-glycerol 3-phosphate contacts are provided by R82, E83, Y134, and D244. 5 residues coordinate glycerol: R82, E83, Y134, D244, and Q245. ADP is bound by residues T266 and G309. ATP is bound by residues T266, G309, Q313, and G410. 2 residues coordinate ADP: G410 and N414.

The protein belongs to the FGGY kinase family. Homotetramer and homodimer (in equilibrium).

The enzyme catalyses glycerol + ATP = sn-glycerol 3-phosphate + ADP + H(+). It functions in the pathway polyol metabolism; glycerol degradation via glycerol kinase pathway; sn-glycerol 3-phosphate from glycerol: step 1/1. With respect to regulation, activated by phosphorylation and inhibited by fructose 1,6-bisphosphate (FBP). Functionally, key enzyme in the regulation of glycerol uptake and metabolism. Catalyzes the phosphorylation of glycerol to yield sn-glycerol 3-phosphate. The protein is Glycerol kinase of Desulfitobacterium hafniense (strain DSM 10664 / DCB-2).